Here is a 238-residue protein sequence, read N- to C-terminus: Acyl-protein thioesterase 1 (238 aa).

Residues Ser120, Asp174, and His219 each act as charge relay system in the active site.

This sequence belongs to the AB hydrolase superfamily. AB hydrolase 2 family.

The protein resides in the cytoplasm. It localises to the nucleus. The enzyme catalyses S-hexadecanoyl-L-cysteinyl-[protein] + H2O = L-cysteinyl-[protein] + hexadecanoate + H(+). Functionally, hydrolyzes fatty acids from S-acylated cysteine residues in proteins with a strong preference for palmitoylated G-alpha proteins over other acyl substrates. Mediates the deacylation of G-alpha proteins such as GPA1 in vivo, but has weak or no activity toward palmitoylated Ras proteins. Has weak lysophospholipase activity in vitro; however such activity may not exist in vivo. The sequence is that of Acyl-protein thioesterase 1 from Cryptococcus neoformans var. neoformans serotype D (strain B-3501A) (Filobasidiella neoformans).